The sequence spans 211 residues: MKKMIDYSVYLVLDPELCGGLDGMLRVTEAAMAGGAGVVQLRAPQWKKRQWLDAARALQPLCRQGGAVFVVNDQVDVALAVGADGVHVGQQDLPVAVVRELMGPQALIGLSVNHAGQLAAVPSEADYLGLGPVFATSTKKDAAPVLGLAQLAGLAAATSLPTVGIGGIAPANAGAVFAAGVDGVAVVSAICTAADPAAVTRELYALKGHTA.

4-amino-2-methyl-5-(diphosphooxymethyl)pyrimidine-binding positions include 40 to 42 and Asn-72; that span reads QLR. The Mg(2+) site is built by Asp-73 and Asp-92. Position 111 (Ser-111) interacts with 4-amino-2-methyl-5-(diphosphooxymethyl)pyrimidine. 136-138 contributes to the 2-[(2R,5Z)-2-carboxy-4-methylthiazol-5(2H)-ylidene]ethyl phosphate binding site; that stretch reads TST. 4-amino-2-methyl-5-(diphosphooxymethyl)pyrimidine is bound at residue Lys-139. 2-[(2R,5Z)-2-carboxy-4-methylthiazol-5(2H)-ylidene]ethyl phosphate-binding positions include Gly-167 and 187–188; that span reads VS.

This sequence belongs to the thiamine-phosphate synthase family. Requires Mg(2+) as cofactor.

The enzyme catalyses 2-[(2R,5Z)-2-carboxy-4-methylthiazol-5(2H)-ylidene]ethyl phosphate + 4-amino-2-methyl-5-(diphosphooxymethyl)pyrimidine + 2 H(+) = thiamine phosphate + CO2 + diphosphate. It carries out the reaction 2-(2-carboxy-4-methylthiazol-5-yl)ethyl phosphate + 4-amino-2-methyl-5-(diphosphooxymethyl)pyrimidine + 2 H(+) = thiamine phosphate + CO2 + diphosphate. The catalysed reaction is 4-methyl-5-(2-phosphooxyethyl)-thiazole + 4-amino-2-methyl-5-(diphosphooxymethyl)pyrimidine + H(+) = thiamine phosphate + diphosphate. Its pathway is cofactor biosynthesis; thiamine diphosphate biosynthesis; thiamine phosphate from 4-amino-2-methyl-5-diphosphomethylpyrimidine and 4-methyl-5-(2-phosphoethyl)-thiazole: step 1/1. Condenses 4-methyl-5-(beta-hydroxyethyl)thiazole monophosphate (THZ-P) and 2-methyl-4-amino-5-hydroxymethyl pyrimidine pyrophosphate (HMP-PP) to form thiamine monophosphate (TMP). The chain is Thiamine-phosphate synthase from Laribacter hongkongensis (strain HLHK9).